The primary structure comprises 336 residues: Fructose-1,6-bisphosphatase class 1 (336 aa).

Glu-90, Asp-112, Leu-114, and Asp-115 together coordinate Mg(2+). Residues 115–118 (DGSS), Asn-211, and Lys-277 each bind substrate. Residue Glu-283 participates in Mg(2+) binding.

This sequence belongs to the FBPase class 1 family. As to quaternary structure, homotetramer. Mg(2+) serves as cofactor.

The protein resides in the cytoplasm. It catalyses the reaction beta-D-fructose 1,6-bisphosphate + H2O = beta-D-fructose 6-phosphate + phosphate. Its pathway is carbohydrate biosynthesis; gluconeogenesis. The protein is Fructose-1,6-bisphosphatase class 1 of Pseudomonas fluorescens (strain ATCC BAA-477 / NRRL B-23932 / Pf-5).